The sequence spans 219 residues: NAD(P)H-quinone oxidoreductase subunit K 2 (219 aa).

The [4Fe-4S] cluster site is built by Cys53, Cys54, Cys118, and Cys149.

The protein belongs to the complex I 20 kDa subunit family. In terms of assembly, NDH-1 can be composed of about 15 different subunits; different subcomplexes with different compositions have been identified which probably have different functions. [4Fe-4S] cluster serves as cofactor.

It localises to the cellular thylakoid membrane. The catalysed reaction is a plastoquinone + NADH + (n+1) H(+)(in) = a plastoquinol + NAD(+) + n H(+)(out). It catalyses the reaction a plastoquinone + NADPH + (n+1) H(+)(in) = a plastoquinol + NADP(+) + n H(+)(out). Its function is as follows. NDH-1 shuttles electrons from an unknown electron donor, via FMN and iron-sulfur (Fe-S) centers, to quinones in the respiratory and/or the photosynthetic chain. The immediate electron acceptor for the enzyme in this species is believed to be plastoquinone. Couples the redox reaction to proton translocation, and thus conserves the redox energy in a proton gradient. Cyanobacterial NDH-1 also plays a role in inorganic carbon-concentration. The protein is NAD(P)H-quinone oxidoreductase subunit K 2 of Synechocystis sp. (strain ATCC 27184 / PCC 6803 / Kazusa).